The primary structure comprises 306 residues: Armadillo repeat-containing protein 10 (306 aa).

Residues 7 to 29 (VGWVAAGLVLGAGACYCIYRLTR) form a helical membrane-spanning segment. Serine 43 is subject to Phosphoserine. Threonine 48 is subject to Phosphothreonine. An ARM repeat occupies 101-143 (GGIPIVGNKINSLNQSIKEKALNALNNLSVNVENQTKIKIYVP).

As to quaternary structure, interacts with the DNA-binding domain of p53/TP53.

The protein resides in the endoplasmic reticulum membrane. It is found in the mitochondrion outer membrane. In terms of biological role, may play a role in cell survival and cell growth. May suppress the transcriptional activity of p53/TP53. The polypeptide is Armadillo repeat-containing protein 10 (Armc10) (Mus musculus (Mouse)).